A 326-amino-acid chain; its full sequence is Putative ribose-phosphate pyrophosphokinase 2 (326 aa).

ATP contacts are provided by residues 43–45 (DGE) and 102–103 (RQ). Residue His-136 coordinates Mg(2+). Residues Asp-225 and 229–233 (NTGKT) contribute to the D-ribose 5-phosphate site.

In terms of assembly, homohexamer. Mg(2+) serves as cofactor.

It localises to the cytoplasm. The catalysed reaction is D-ribose 5-phosphate + ATP = 5-phospho-alpha-D-ribose 1-diphosphate + AMP + H(+). The protein operates within metabolic intermediate biosynthesis; 5-phospho-alpha-D-ribose 1-diphosphate biosynthesis; 5-phospho-alpha-D-ribose 1-diphosphate from D-ribose 5-phosphate (route I): step 1/1. Functionally, involved in the biosynthesis of the central metabolite phospho-alpha-D-ribosyl-1-pyrophosphate (PRPP) via the transfer of pyrophosphoryl group from ATP to 1-hydroxyl of ribose-5-phosphate (Rib-5-P). The sequence is that of Putative ribose-phosphate pyrophosphokinase 2 from Streptococcus pyogenes serotype M6 (strain ATCC BAA-946 / MGAS10394).